We begin with the raw amino-acid sequence, 426 residues long: Torsin-4A (426 aa).

The tract at residues 41–60 (QPGTEPDSGTGTLGPTGSLG) is disordered. The span at 48–60 (SGTGTLGPTGSLG) shows a compositional bias: low complexity. Ser-58 and Ser-76 each carry phosphoserine. Thr-84 is subject to Phosphothreonine. Residue Ser-101 is modified to Phosphoserine. A helical transmembrane segment spans residues 117–133 (CLLLLVAIVGFQVLNAI). Residue 189–196 (GPSGVGKS) participates in ATP binding.

This sequence belongs to the ClpA/ClpB family. Torsin subfamily.

It is found in the membrane. The chain is Torsin-4A (Tor4a) from Mus musculus (Mouse).